We begin with the raw amino-acid sequence, 63 residues long: Large ribosomal subunit protein uL29 (63 aa).

The protein belongs to the universal ribosomal protein uL29 family.

This Edwardsiella ictaluri (strain 93-146) protein is Large ribosomal subunit protein uL29.